Here is a 165-residue protein sequence, read N- to C-terminus: uncharacterized protein (165 aa).

6 helical membrane-spanning segments follow: residues 6 to 26 (ILFP…SGQA), 28 to 48 (LFSG…AFVY), 54 to 74 (AVTP…HFFA), 78 to 98 (WVWW…SLLV), 110 to 130 (AVSM…MAWL), and 138 to 158 (ALLK…LLLI).

It is found in the cell membrane. This is an uncharacterized protein from Bacillus subtilis (strain 168).